A 359-amino-acid polypeptide reads, in one-letter code: ATPase ASNA1 homolog (359 aa).

ATP is bound at residue 23-30 (KGGVGKTT). Residue D63 is part of the active site. E252 and N279 together coordinate ATP. Residues C291 and C294 each contribute to the Zn(2+) site.

The protein belongs to the arsA ATPase family. Homodimer.

Its subcellular location is the cytoplasm. The protein resides in the endoplasmic reticulum. Its function is as follows. ATPase required for the post-translational delivery of tail-anchored (TA) proteins to the endoplasmic reticulum. Recognizes and selectively binds the transmembrane domain of TA proteins in the cytosol. This complex then targets to the endoplasmic reticulum by membrane-bound receptors, where the tail-anchored protein is released for insertion. This process is regulated by ATP binding and hydrolysis. ATP binding drives the homodimer towards the closed dimer state, facilitating recognition of newly synthesized TA membrane proteins. ATP hydrolysis is required for insertion. Subsequently, the homodimer reverts towards the open dimer state, lowering its affinity for the membrane-bound receptor, and returning it to the cytosol to initiate a new round of targeting. This is ATPase ASNA1 homolog from Trypanosoma cruzi (strain CL Brener).